A 363-amino-acid polypeptide reads, in one-letter code: Ribosomal RNA large subunit methyltransferase M (363 aa).

S-adenosyl-L-methionine is bound by residues Ser-194, 227–230 (CPGG), Asp-246, Asp-266, and Asp-284. Lys-313 (proton acceptor) is an active-site residue.

The protein belongs to the class I-like SAM-binding methyltransferase superfamily. RNA methyltransferase RlmE family. RlmM subfamily. As to quaternary structure, monomer.

The protein resides in the cytoplasm. It catalyses the reaction cytidine(2498) in 23S rRNA + S-adenosyl-L-methionine = 2'-O-methylcytidine(2498) in 23S rRNA + S-adenosyl-L-homocysteine + H(+). Catalyzes the 2'-O-methylation at nucleotide C2498 in 23S rRNA. This chain is Ribosomal RNA large subunit methyltransferase M, found in Haemophilus influenzae (strain 86-028NP).